Here is a 130-residue protein sequence, read N- to C-terminus: Small ribosomal subunit protein uS9 (130 aa).

It belongs to the universal ribosomal protein uS9 family.

The protein is Small ribosomal subunit protein uS9 of Shigella sonnei (strain Ss046).